Here is a 340-residue protein sequence, read N- to C-terminus: MTTVLVTGGAGFIATHTDIELLNKGYDVISVDNYGNSSPVALERVEQITGKPVKRYDGDVRDEALMERVFAENNIDWVIHFAGLKAVGESVAKPIEYYDNNLYSTLVLLKVMKKHNVKKIIFSSSATVYGTPKELPITEETPTGGTTNPYGTSKLFQEQILRDVHVADPSWTIVLLRYFNPVGAHESGLLGEDPKGIPANLTPYVAKVAVGELKEVQVYGDDYDTPDGTGVRDYIHVVDLAKGHVAVIDHIDKEGVFVYNLGTGHGYSVLEVIKAYEKAAGHPIPYAIKPRRPGDIAACYADASKAEKELGWKAELTIDDMAASSLNWQTKNPNGFRDAE.

NAD(+) contacts are provided by residues 12–13, 32–37, 59–60, 81–85, N100, S125, Y150, K154, and F179; these read FI, DNYGNS, DV, and FAGLK. Positions 125 and 150 each coordinate substrate. The active-site Proton acceptor is the Y150. Substrate is bound by residues N180, 200 to 201, 217 to 219, R232, and 292 to 295; these read NL, QVY, and RPGD.

It belongs to the NAD(P)-dependent epimerase/dehydratase family. As to quaternary structure, homodimer. It depends on NAD(+) as a cofactor.

The catalysed reaction is UDP-alpha-D-glucose = UDP-alpha-D-galactose. It functions in the pathway carbohydrate metabolism; galactose metabolism. Involved in the metabolism of galactose. Catalyzes the conversion of UDP-galactose (UDP-Gal) to UDP-glucose (UDP-Glc) through a mechanism involving the transient reduction of NAD. Can also epimerize UDP-GalNAc to UDP-GlcNAc. Involved in the lacto-N-biose I/galacto-N-biose (LNB/GNB) degradation pathway, which is important for host intestinal colonization by bifidobacteria. The protein is UDP-glucose 4-epimerase (lnpD) of Bifidobacterium longum subsp. longum (strain ATCC 15707 / DSM 20219 / JCM 1217 / NCTC 11818 / E194b).